A 453-amino-acid chain; its full sequence is UDP-glucosyltransferase avaP (453 aa).

Belongs to the UDP-glycosyltransferase family.

The protein operates within secondary metabolite biosynthesis. UDP-glucosyltransferase; part of the cluster that mediates the biosynthesis of a highly modified cyclo-arginine-tryptophan dipeptide (cRW). The first step of the pathway is perfornmed by the arginine-containing cyclodipeptide synthase (RCPDS) avaA that acts as the scaffold-generating enzyme and is responsible for formation of the cyclo-Arg-Trp (cRW) diketopiperazine. AvaB then acts as a multifunctional flavoenzyme that is responsible for generating the cyclo-Arg-formylkynurenine DKP, which can be deformylated by avaC. AvaB then further catalyzes an additional N-oxidation followed by cyclization and dehydration. The next step is an N-acetylation of the guanidine group catalyzed by the arginine N-acetyltransferase avaD. The roles of the additional enzymes identified within the ava cluster still have to be determined. The sequence is that of UDP-glucosyltransferase avaP from Aspergillus versicolor.